The following is an 80-amino-acid chain: Probable small nuclear ribonucleoprotein G (80 aa).

Residues 5–76 (GQPPDLKKYM…IVTVEALEPV (72 aa)) enclose the Sm domain.

It belongs to the snRNP Sm proteins family.

It is found in the nucleus. Functionally, probable common Sm protein, is found in U1 and U2 snRNPs and may be part of the spliceosome. In Arabidopsis thaliana (Mouse-ear cress), this protein is Probable small nuclear ribonucleoprotein G.